A 333-amino-acid chain; its full sequence is Probable tRNA-dihydrouridine synthase 1 (333 aa).

FMN is bound by residues 17-19 (PMA) and glutamine 71. The Proton donor role is filled by cysteine 102. Residues lysine 141, 202 to 204 (NGD), and 226 to 227 (GR) contribute to the FMN site.

Belongs to the Dus family. FMN is required as a cofactor.

The catalysed reaction is a 5,6-dihydrouridine in tRNA + NAD(+) = a uridine in tRNA + NADH + H(+). It catalyses the reaction a 5,6-dihydrouridine in tRNA + NADP(+) = a uridine in tRNA + NADPH + H(+). In terms of biological role, catalyzes the synthesis of 5,6-dihydrouridine (D), a modified base found in the D-loop of most tRNAs, via the reduction of the C5-C6 double bond in target uridines. In Bacillus subtilis (strain 168), this protein is Probable tRNA-dihydrouridine synthase 1 (dus1).